A 149-amino-acid chain; its full sequence is 17 kDa major membrane protein (149 aa).

The signal sequence occupies residues 1–19; sequence MKKIIKLSLLSLSIAGLAS. A lipid anchor (N-palmitoyl cysteine) is attached at cysteine 20. Cysteine 20 carries the S-diacylglycerol cysteine lipid modification.

It localises to the cell outer membrane. The protein is 17 kDa major membrane protein of Francisella tularensis subsp. holarctica (strain LVS).